Reading from the N-terminus, the 358-residue chain is Histidinol-phosphate aminotransferase (358 aa).

Lysine 218 carries the N6-(pyridoxal phosphate)lysine modification.

Belongs to the class-II pyridoxal-phosphate-dependent aminotransferase family. Histidinol-phosphate aminotransferase subfamily. In terms of assembly, homodimer. The cofactor is pyridoxal 5'-phosphate.

The catalysed reaction is L-histidinol phosphate + 2-oxoglutarate = 3-(imidazol-4-yl)-2-oxopropyl phosphate + L-glutamate. The protein operates within amino-acid biosynthesis; L-histidine biosynthesis; L-histidine from 5-phospho-alpha-D-ribose 1-diphosphate: step 7/9. This chain is Histidinol-phosphate aminotransferase, found in Dehalococcoides mccartyi (strain ATCC BAA-2100 / JCM 16839 / KCTC 5957 / BAV1).